Reading from the N-terminus, the 135-residue chain is Large ribosomal subunit protein bL19 (135 aa).

It belongs to the bacterial ribosomal protein bL19 family.

This protein is located at the 30S-50S ribosomal subunit interface and may play a role in the structure and function of the aminoacyl-tRNA binding site. This is Large ribosomal subunit protein bL19 from Protochlamydia amoebophila (strain UWE25).